Consider the following 39-residue polypeptide: uncharacterized protein (39 aa).

This is an uncharacterized protein from Haemophilus influenzae (strain ATCC 51907 / DSM 11121 / KW20 / Rd).